The following is a 632-amino-acid chain: Mitochondrial distribution and morphology protein 34 (632 aa).

Positions 1–203 constitute an SMP-LTD domain; the sequence is MSFKVNWNSL…LPTLIHQLSL (203 aa). Disordered regions lie at residues 221 to 253 and 384 to 435; these read ANAS…TSSL and KPKR…SSTL. Over residues 224-252 the composition is skewed to low complexity; that stretch reads STSSSSTSSTSSSTTSSSSSSSPSSFTSS. Residues 384-400 are compositionally biased toward basic residues; that stretch reads KPKRRVIRLGKSKNKSK. The segment covering 401-412 has biased composition (basic and acidic residues); the sequence is SKTETKTEHNDE. Positions 422 to 435 are enriched in low complexity; the sequence is PLSSTPASSSSSTL.

It belongs to the MDM34 family. As to quaternary structure, component of the ER-mitochondria encounter structure (ERMES) or MDM complex, composed of MMM1, MDM10, MDM12 and MDM34.

The protein resides in the mitochondrion outer membrane. Component of the ERMES/MDM complex, which serves as a molecular tether to connect the endoplasmic reticulum (ER) and mitochondria. Components of this complex are involved in the control of mitochondrial shape and protein biogenesis, and function in nonvesicular lipid trafficking between the ER and mitochondria. MDM34 is required for the interaction of the ER-resident membrane protein MMM1 and the outer mitochondrial membrane-resident beta-barrel protein MDM10. The chain is Mitochondrial distribution and morphology protein 34 from Lodderomyces elongisporus (strain ATCC 11503 / CBS 2605 / JCM 1781 / NBRC 1676 / NRRL YB-4239) (Yeast).